The chain runs to 379 residues: Sulfate adenylyltransferase (379 aa).

Belongs to the sulfate adenylyltransferase family.

The catalysed reaction is sulfate + ATP + H(+) = adenosine 5'-phosphosulfate + diphosphate. The protein operates within sulfur metabolism; hydrogen sulfide biosynthesis; sulfite from sulfate: step 1/3. The chain is Sulfate adenylyltransferase (sat) from Pyrococcus abyssi (strain GE5 / Orsay).